The following is a 130-amino-acid chain: MAKVQYYGTGRRKKSIARVRLVPGEGKVLINKRDEEEYFGLETLRVIVNQPLVLTGTKDKFDVLVNVYGGGLTGQAGAIRHGISRALLKADESLRPELKKAGFLTRDPRMKERKKYGLKKARRAPQFSKR.

Positions 101 to 110 are enriched in basic and acidic residues; the sequence is AGFLTRDPRM. Residues 101–130 form a disordered region; that stretch reads AGFLTRDPRMKERKKYGLKKARRAPQFSKR. The span at 111-130 shows a compositional bias: basic residues; it reads KERKKYGLKKARRAPQFSKR.

This sequence belongs to the universal ribosomal protein uS9 family.

This Clostridium tetani (strain Massachusetts / E88) protein is Small ribosomal subunit protein uS9.